Consider the following 118-residue polypeptide: Urease subunit beta (118 aa).

It belongs to the urease beta subunit family. As to quaternary structure, heterotrimer of UreA (gamma), UreB (beta) and UreC (alpha) subunits. Three heterotrimers associate to form the active enzyme.

Its subcellular location is the cytoplasm. The enzyme catalyses urea + 2 H2O + H(+) = hydrogencarbonate + 2 NH4(+). The protein operates within nitrogen metabolism; urea degradation; CO(2) and NH(3) from urea (urease route): step 1/1. This Aliivibrio fischeri (strain ATCC 700601 / ES114) (Vibrio fischeri) protein is Urease subunit beta.